Here is a 376-residue protein sequence, read N- to C-terminus: PqqA peptide cyclase (376 aa).

The Radical SAM core domain maps to 7-222 (VGLPLWLLAE…TNEYRDKLKA (216 aa)). Residues Cys-21, Cys-25, and Cys-28 each contribute to the [4Fe-4S] cluster site.

This sequence belongs to the radical SAM superfamily. PqqE family. In terms of assembly, interacts with PqqD. The interaction is necessary for activity of PqqE. [4Fe-4S] cluster is required as a cofactor.

The enzyme catalyses [PQQ precursor protein] + S-adenosyl-L-methionine = E-Y cross-linked-[PQQ precursor protein] + 5'-deoxyadenosine + L-methionine + H(+). It participates in cofactor biosynthesis; pyrroloquinoline quinone biosynthesis. Its function is as follows. Catalyzes the cross-linking of a glutamate residue and a tyrosine residue in the PqqA protein as part of the biosynthesis of pyrroloquinoline quinone (PQQ). This Pseudomonas putida (strain ATCC 47054 / DSM 6125 / CFBP 8728 / NCIMB 11950 / KT2440) protein is PqqA peptide cyclase.